The sequence spans 388 residues: Succinate--CoA ligase [ADP-forming] subunit beta (388 aa).

Positions 9–244 constitute an ATP-grasp domain; that stretch reads KALFAEYGLP…PSQDDAREAH (236 aa). Residues Lys-46, 53–55, Glu-99, Thr-102, and Glu-107 contribute to the ATP site; that span reads GRG. Mg(2+)-binding residues include Asn-199 and Asp-213. Substrate-binding positions include Asn-264 and 321–323; that span reads GIV.

It belongs to the succinate/malate CoA ligase beta subunit family. As to quaternary structure, heterotetramer of two alpha and two beta subunits. Requires Mg(2+) as cofactor.

It catalyses the reaction succinate + ATP + CoA = succinyl-CoA + ADP + phosphate. It carries out the reaction GTP + succinate + CoA = succinyl-CoA + GDP + phosphate. It functions in the pathway carbohydrate metabolism; tricarboxylic acid cycle; succinate from succinyl-CoA (ligase route): step 1/1. Functionally, succinyl-CoA synthetase functions in the citric acid cycle (TCA), coupling the hydrolysis of succinyl-CoA to the synthesis of either ATP or GTP and thus represents the only step of substrate-level phosphorylation in the TCA. The beta subunit provides nucleotide specificity of the enzyme and binds the substrate succinate, while the binding sites for coenzyme A and phosphate are found in the alpha subunit. This Shewanella sediminis (strain HAW-EB3) protein is Succinate--CoA ligase [ADP-forming] subunit beta.